Consider the following 122-residue polypeptide: Large ribosomal subunit protein uL14 (122 aa).

The protein belongs to the universal ribosomal protein uL14 family. In terms of assembly, part of the 50S ribosomal subunit. Forms a cluster with proteins L3 and L19. In the 70S ribosome, L14 and L19 interact and together make contacts with the 16S rRNA in bridges B5 and B8.

Its function is as follows. Binds to 23S rRNA. Forms part of two intersubunit bridges in the 70S ribosome. The polypeptide is Large ribosomal subunit protein uL14 (Carboxydothermus hydrogenoformans (strain ATCC BAA-161 / DSM 6008 / Z-2901)).